The following is a 118-amino-acid chain: Small ribosomal subunit protein bS6 (118 aa).

The protein belongs to the bacterial ribosomal protein bS6 family.

In terms of biological role, binds together with bS18 to 16S ribosomal RNA. The sequence is that of Small ribosomal subunit protein bS6 from Saccharopolyspora erythraea (strain ATCC 11635 / DSM 40517 / JCM 4748 / NBRC 13426 / NCIMB 8594 / NRRL 2338).